The sequence spans 337 residues: Junctional sarcoplasmic reticulum protein 1 (337 aa).

The tract at residues 1–84 (MATRAMEELD…EKEPVSKVTS (84 aa)) is mediates interaction with CACNA1S. Disordered regions lie at residues 23-125 (SALA…ELPW) and 159-337 (EAPA…KGRD). 2 stretches are compositionally biased toward basic and acidic residues: residues 49 to 59 (SRSHDSQERVT) and 69 to 79 (TKPKKMEKEPV). Residues 165 to 180 (PESWASSSSSPKGPAS) are compositionally biased toward low complexity. Over residues 199 to 213 (SKLEERVQIPRSEEA) the composition is skewed to basic and acidic residues. Positions 214–225 (AEKDEWESEEAA) are enriched in acidic residues. 3 stretches are compositionally biased toward basic and acidic residues: residues 236 to 277 (GPKE…RGAR), 285 to 309 (RRWE…DRKR), and 316 to 325 (RRPDEEDRPL). The span at 326–337 (GRQKRRAGKGRD) shows a compositional bias: basic residues.

Interacts with CACNA1S, CACNB1 and calsequestrin.

The protein resides in the sarcoplasmic reticulum membrane. The protein localises to the endoplasmic reticulum membrane. Functionally, involved in skeletal muscle excitation/contraction coupling (EC), probably acting as a regulator of the voltage-sensitive calcium channel CACNA1S. EC is a physiological process whereby an electrical signal (depolarization of the plasma membrane) is converted into a chemical signal, a calcium gradient, by the opening of ryanodine receptor calcium release channels. May regulate CACNA1S membrane targeting and activity. This is Junctional sarcoplasmic reticulum protein 1 (JSRP1) from Bos taurus (Bovine).